Here is a 142-residue protein sequence, read N- to C-terminus: MSTQSVQTFGKKKTATAVAHVKAGKGLIKINGSPITLVQPEILRFKVYEPLTLVGLDKFQGIDIRVKVTGGGHVSQVYAIRQAIAKGLVAYHQKYVDEASKNELKKIFASYDKTLLVADSRRMEPKKFGGRGARARFQKSYR.

This sequence belongs to the universal ribosomal protein uS9 family. As to quaternary structure, component of the small ribosomal subunit. Mature ribosomes consist of a small (40S) and a large (60S) subunit. The 40S subunit contains about 32 different proteins and 1 molecule of RNA (18S). The 60S subunit contains 45 different proteins and 3 molecules of RNA (25S, 5.8S and 5S).

Its subcellular location is the cytoplasm. Functionally, component of the ribosome, a large ribonucleoprotein complex responsible for the synthesis of proteins in the cell. The small ribosomal subunit (SSU) binds messenger RNAs (mRNAs) and translates the encoded message by selecting cognate aminoacyl-transfer RNA (tRNA) molecules. The large subunit (LSU) contains the ribosomal catalytic site termed the peptidyl transferase center (PTC), which catalyzes the formation of peptide bonds, thereby polymerizing the amino acids delivered by tRNAs into a polypeptide chain. The nascent polypeptides leave the ribosome through a tunnel in the LSU and interact with protein factors that function in enzymatic processing, targeting, and the membrane insertion of nascent chains at the exit of the ribosomal tunnel. This is Small ribosomal subunit protein uS9 (RPS16A) from Candida albicans (strain SC5314 / ATCC MYA-2876) (Yeast).